We begin with the raw amino-acid sequence, 415 residues long: PRKCA-binding protein (415 aa).

In terms of domain architecture, PDZ spans 22 to 105 (KVTLQKDAQN…EVTIHYNKLQ (84 aa)). Zn(2+) is bound by residues cysteine 44 and cysteine 46. Threonine 82 is subject to Phosphothreonine. Residues 144 to 357 (LCNDGLVKRL…CYAVLRDADV (214 aa)) enclose the AH domain. Residues 376-415 (EEFTDGEEEEEEEDTAAGEPSRDTRGAAGPLDKGGSWCDS) form a disordered region. The span at 377-391 (EFTDGEEEEEEEDTA) shows a compositional bias: acidic residues. The S-palmitoyl cysteine; by DHHC8 moiety is linked to residue cysteine 413.

In terms of assembly, monomer and homodimer. Interacts with CXADR. Interacts presynaptically with the glutamate receptors GRIA2, GRIA3, GRIK3, isoform 3 of GRIA4, isoform A of GRM4, GRM7 and GRM8; with NAPA and NAPB; and with BTG2. The interaction with NAPA and NAPB disrupts the interaction with GRIA2, conducting to the internalization of GRIA2. Interacts with PRKCA; with the amine transporters SLC6A2 and SLC6A3; with the channels ASIC1 and ASIC2; with the GTP-binding proteins ARF1 and ARF3; with the ephrin receptor tyrosine kinases EPHA7, EPHB1 and EPHB2; with ERBB2 and through its PDZ domain with the C-terminal tail of PRLHR. Interacts with UNC5A. Interacts (via AH domain) with NCS1/FREQ; in a calcium-dependent manner. Interacts with F-actin and associates with the ARP2/3 complex. Interacts (via PDZ domain) with ARF1 (activated); the interaction blocks Arp2/3 complex inhibition. Interacts with SORCS3. Post-translationally, phosphorylation at Thr-82 appears to inhibit the interaction with AMPA receptors. In terms of processing, palmitoylation on Cys-413 is essential for long-term synaptic depression (LTD). In terms of tissue distribution, ubiquitous.

The protein localises to the cytoplasm. Its subcellular location is the perinuclear region. It localises to the membrane. The protein resides in the postsynaptic density. It is found in the synapse. The protein localises to the synaptosome. Its subcellular location is the cytoskeleton. Probable adapter protein that bind to and organize the subcellular localization of a variety of membrane proteins containing some PDZ recognition sequence. Involved in the clustering of various receptors, possibly by acting at the receptor internalization level. Plays a role in synaptic plasticity by regulating the trafficking and internalization of AMPA receptors. May be regulated upon PRKCA activation. May regulate ASIC1/ASIC3 channel. Regulates actin polymerization by inhibiting the actin-nucleating activity of the Arp2/3 complex; the function is competitive with nucleation promoting factors and is linked to neuronal morphology regulation and AMPA receptor (AMPAR) endocytosis. Via interaction with the Arp2/3 complex involved in regulation of synaptic plasicity of excitatory synapses and required for spine shrinkage during long-term depression (LTD). Involved in regulation of astrocyte morphology, antagonistic to Arp2/3 complex activator WASL/N-WASP function. This is PRKCA-binding protein (PICK1) from Homo sapiens (Human).